Consider the following 656-residue polypeptide: DNA mismatch repair protein MutL (656 aa).

Positions 385–427 (DNSDSLTEQNSTDYTVNQPETGSVSEKITDRTVESSNEFTDRT) are disordered. Residues 387–410 (SDSLTEQNSTDYTVNQPETGSVSE) are compositionally biased toward polar residues. Positions 411–427 (KITDRTVESSNEFTDRT) are enriched in basic and acidic residues.

Belongs to the DNA mismatch repair MutL/HexB family.

In terms of biological role, this protein is involved in the repair of mismatches in DNA. It is required for dam-dependent methyl-directed DNA mismatch repair. May act as a 'molecular matchmaker', a protein that promotes the formation of a stable complex between two or more DNA-binding proteins in an ATP-dependent manner without itself being part of a final effector complex. The sequence is that of DNA mismatch repair protein MutL from Lactococcus lactis subsp. cremoris (strain SK11).